The primary structure comprises 64 residues: Outer envelope membrane protein 7 (64 aa).

The Chloroplast intermembrane segment spans residues 1-11 (MGKTSGAKQAT). Residues 12–32 (VVVAAMALGWLAIEIAFKPFL) form a helical membrane-spanning segment. The AKR2A-binding sequence (ABS) required for chloroplast outer envelope membrane targeting motif lies at 29–35 (KPFLDKF). Residues 33-64 (DKFRSSIDKSDPTKDPDDFDTAATATTSKEGL) are Cytoplasmic-facing. A compositionally biased stretch (basic and acidic residues) spans 39 to 48 (IDKSDPTKDP). The interval 39 to 64 (IDKSDPTKDPDDFDTAATATTSKEGL) is disordered. The segment covering 53–64 (TAATATTSKEGL) has biased composition (low complexity).

As to quaternary structure, interacts with AKR2A. As to expression, confined to green tissues.

The protein localises to the plastid. It localises to the chloroplast outer membrane. This chain is Outer envelope membrane protein 7, found in Arabidopsis thaliana (Mouse-ear cress).